The following is a 243-amino-acid chain: DNA repair protein RecO (243 aa).

The protein belongs to the RecO family.

Functionally, involved in DNA repair and RecF pathway recombination. This is DNA repair protein RecO from Serratia proteamaculans (strain 568).